Reading from the N-terminus, the 186-residue chain is METFSSKDLALQAQKKILSRMASKSMVNMFIDETSSEILDELYRVSKEYTKNKTESQKVIKNLIKIAVKIGVLFRHNRFSPEELVLAKDFKNRLHNGAMTAISFYEVEFTFEKDVLPEILMECKNLVLRLVEKHLTPKSHGRIQHVFNHFADPEMLSQLYDTKSSLRPHLQKICNGLNKLIEEEKL.

It belongs to the TNFAIP8 family. TNFAIP8L2 subfamily.

Its function is as follows. Acts as a negative regulator of innate and adaptive immunity by maintaining immune homeostasis. Negative regulator of Toll-like receptor and T-cell receptor function. Prevents hyperresponsiveness of the immune system and maintains immune homeostasis. Inhibits jun/ap1 and NF-kappa-B activation. Promotes Fas-induced apoptosis. The chain is Tumor necrosis factor alpha-induced protein 8-like protein 2 (tnfaip8l2) from Xenopus laevis (African clawed frog).